A 363-amino-acid polypeptide reads, in one-letter code: Protein-arginine kinase (363 aa).

In terms of domain architecture, Phosphagen kinase C-terminal spans 24–254; that stretch reads IVLSSRIRLA…AQLIEQERSA (231 aa). Residues 27-31, His92, Arg125, 176-180, and 207-212 each bind ATP; these read SSRIR, RASVM, and RGIYGE. The RDXXRA motif of the pArg binding pocket involved in allosteric regulation signature appears at 337–342; sequence RDIKRA.

This sequence belongs to the ATP:guanido phosphotransferase family.

It catalyses the reaction L-arginyl-[protein] + ATP = N(omega)-phospho-L-arginyl-[protein] + ADP + H(+). Appears to be allosterically activated by the binding of pArg-containing polypeptides to the pArg-binding pocket localized in the C-terminal domain of McsB. Functionally, catalyzes the specific phosphorylation of arginine residues in a large number of proteins. Is part of the bacterial stress response system. Protein arginine phosphorylation has a physiologically important role and is involved in the regulation of many critical cellular processes, such as protein homeostasis, motility, competence, and stringent and stress responses, by regulating gene expression and protein activity. This chain is Protein-arginine kinase, found in Bacillus pumilus (strain SAFR-032).